Here is a 208-residue protein sequence, read N- to C-terminus: Phosphoheptose isomerase (208 aa).

Residues 38–200 (MALTLARGRK…LFENVLALQP (163 aa)) enclose the SIS domain. 53–55 (NGG) contributes to the substrate binding site. Zn(2+) contacts are provided by histidine 62 and glutamate 66. Residues glutamate 66, 95–96 (ND), 121–123 (STS), serine 126, and glutamine 173 each bind substrate. Residues glutamine 173 and histidine 181 each contribute to the Zn(2+) site.

This sequence belongs to the SIS family. GmhA subfamily. Homotetramer. Zn(2+) serves as cofactor.

The protein localises to the cytoplasm. It catalyses the reaction 2 D-sedoheptulose 7-phosphate = D-glycero-alpha-D-manno-heptose 7-phosphate + D-glycero-beta-D-manno-heptose 7-phosphate. It participates in carbohydrate biosynthesis; D-glycero-D-manno-heptose 7-phosphate biosynthesis; D-glycero-alpha-D-manno-heptose 7-phosphate and D-glycero-beta-D-manno-heptose 7-phosphate from sedoheptulose 7-phosphate: step 1/1. Catalyzes the isomerization of sedoheptulose 7-phosphate in D-glycero-D-manno-heptose 7-phosphate. This is Phosphoheptose isomerase from Nitratidesulfovibrio vulgaris (strain DSM 19637 / Miyazaki F) (Desulfovibrio vulgaris).